Here is a 382-residue protein sequence, read N- to C-terminus: Sad1-interacting factor 2 (382 aa).

The residue at position 135 (serine 135) is a Phosphoserine. The chain crosses the membrane as a helical span at residues glutamate 356 to valine 376.

The protein belongs to the RMD1/sif2 family. Interacts with sad1.

The protein resides in the nucleus membrane. Required for sporulation where it is believed to have a role in meiotic nuclear division. The chain is Sad1-interacting factor 2 (sif2) from Schizosaccharomyces pombe (strain 972 / ATCC 24843) (Fission yeast).